Consider the following 706-residue polypeptide: Acyl-coenzyme A oxidase (706 aa).

Residues 682–706 (MLNRPSKEERERFEKSTETAKILSK) are disordered. Positions 686 to 699 (PSKEERERFEKSTE) are enriched in basic and acidic residues.

Belongs to the acyl-CoA oxidase family. The cofactor is FAD.

The protein localises to the peroxisome. The catalysed reaction is a 2,3-saturated acyl-CoA + O2 = a (2E)-enoyl-CoA + H2O2. Its pathway is lipid metabolism; peroxisomal fatty acid beta-oxidation. The protein is Acyl-coenzyme A oxidase (POX1) of Debaryomyces hansenii (strain ATCC 36239 / CBS 767 / BCRC 21394 / JCM 1990 / NBRC 0083 / IGC 2968) (Yeast).